A 485-amino-acid polypeptide reads, in one-letter code: dTDP-4-amino-4,6-dideoxy-D-glucose ammonia-lyase (485 aa).

The [4Fe-4S] cluster site is built by Cys141, Cys145, and Cys148.

The protein belongs to the radical SAM superfamily. DesII family. As to quaternary structure, monomer. [4Fe-4S] cluster is required as a cofactor.

The catalysed reaction is dTDP-4-amino-4,6-dideoxy-alpha-D-glucose + AH2 + S-adenosyl-L-methionine = dTDP-3-dehydro-4,6-dideoxy-alpha-D-glucose + 5'-deoxyadenosine + L-methionine + A + NH4(+) + H(+). In terms of biological role, involved in the biosynthesis of dTDP-alpha-D-desosamine, a sugar found in several bacterial macrolide antibiotics. Catalyzes the SAM-dependent deamination of dTDP-4-amino-4,6-deoxyglucose (dTDP-viosamine) to yield dTDP-3-keto-4,6-deoxyglucose. It can also catalyze the oxidative dehydrogenation of the non-physiological substrate dTDP-D-quinovose to dTDP-3-keto-6-deoxy-d-glucose. It can also deaminate dTDP-3-amino-3,6-deoxyglucose. The polypeptide is dTDP-4-amino-4,6-dideoxy-D-glucose ammonia-lyase (Streptomyces venezuelae).